Here is a 448-residue protein sequence, read N- to C-terminus: Homogentisate 1,2-dioxygenase (448 aa).

H303 functions as the Proton acceptor in the catalytic mechanism. Residues H346 and E352 each contribute to the Fe cation site. Homogentisate is bound by residues Y361 and H382. Position 382 (H382) interacts with Fe cation.

This sequence belongs to the homogentisate dioxygenase family. In terms of assembly, hexamer; dimer of trimers. It depends on Fe cation as a cofactor.

It catalyses the reaction homogentisate + O2 = 4-maleylacetoacetate + H(+). It participates in amino-acid degradation; L-phenylalanine degradation; acetoacetate and fumarate from L-phenylalanine: step 4/6. Its function is as follows. Involved in the catabolism of homogentisate (2,5-dihydroxyphenylacetate or 2,5-OH-PhAc), a central intermediate in the degradation of phenylalanine and tyrosine. Catalyzes the oxidative ring cleavage of the aromatic ring of homogentisate to yield maleylacetoacetate. The sequence is that of Homogentisate 1,2-dioxygenase from Rhodopseudomonas palustris (strain ATCC BAA-98 / CGA009).